The primary structure comprises 301 residues: Rhodopsin (301 aa).

Topologically, residues 1-18 are extracellular; sequence LHMIHLHWYQYPPMNPMM. Residues 19–43 traverse the membrane as a helical segment; that stretch reads YPLLLIFMLFTGILCLAGNFVTIWV. The Cytoplasmic portion of the chain corresponds to 44–55; the sequence is FMNTKSLRTPAN. Residues 56–78 form a helical membrane-spanning segment; sequence LLVVNLAMSDFLMMFTMFPPMMV. Residues 79–92 lie on the Extracellular side of the membrane; the sequence is TCYYHTWTLGPTFC. Residues Cys92 and Cys169 are joined by a disulfide bond. The chain crosses the membrane as a helical span at residues 93 to 115; it reads QVYAFLGNLCGCASIWTMVFITF. A 'Ionic lock' involved in activated form stabilization motif is present at residues 116 to 118; sequence DRY. Topologically, residues 116-134 are cytoplasmic; the sequence is DRYNVIVKGVAGEPLSNKK. Residues 135–155 form a helical membrane-spanning segment; sequence AAMWILSVWVLSTAWCMAPFF. At 156-182 the chain is on the extracellular side; it reads GWNSYVPEGNLTGCGTDYLSEDILSRS. Asn165 carries an N-linked (GlcNAc...) asparagine glycan. The chain crosses the membrane as a helical span at residues 183–204; sequence YLYIYSTWVYFLPLTITIYCYV. The Cytoplasmic segment spans residues 205–245; that stretch reads FIIKAVAAHEKGMRDQAKKMGIKSLRNEEAQKTSAECRLAK. The helical transmembrane segment at 246–267 threads the bilayer; sequence IAMTTVALWFIAWTPYLLINWV. The Extracellular segment spans residues 268-278; the sequence is GMFARSYLSPV. Residues 279–300 form a helical membrane-spanning segment; sequence YTIWGYVFAKANAVYNPIVYAI. The residue at position 288 (Lys288) is an N6-(retinylidene)lysine.

It belongs to the G-protein coupled receptor 1 family. Opsin subfamily. As to quaternary structure, homodimer. Interacts with GNAQ. In terms of processing, contains one covalently linked retinal chromophore.

It is found in the cell projection. The protein localises to the rhabdomere membrane. In terms of biological role, photoreceptor required for image-forming vision at low light intensity. Can use both retinal and 3-dehydroretinal as visual pigment. Light-induced isomerization of 11-cis to all-trans retinal triggers a conformational change that activates signaling via G-proteins. Signaling via GNAQ probably mediates the activation of phospholipase C. The sequence is that of Rhodopsin (RHO) from Faxonius virilis (Virile crayfish).